Reading from the N-terminus, the 148-residue chain is Iron/alpha-ketoglutarate-dependent dioxygenase ausU (148 aa).

Fe cation contacts are provided by His-45 and Asp-47.

This sequence belongs to the PhyH family. Homodimer. Fe cation serves as cofactor.

Its pathway is secondary metabolite biosynthesis; terpenoid biosynthesis. In terms of biological role, iron/alpha-ketoglutarate-dependent dioxygenase; part of the gene cluster B that mediates the biosynthesis of austinol and dehydroaustinol, two fungal meroterpenoids. The first step of the pathway is the synthesis of 3,5-dimethylorsellinic acid by the polyketide synthase ausA. 3,5-dimethylorsellinic acid is then prenylated by the polyprenyl transferase ausN. Further epoxidation by the FAD-dependent monooxygenase ausM and cyclization by the probable terpene cyclase ausL lead to the formation of protoaustinoid A. Protoaustinoid A is then oxidized to spiro-lactone preaustinoid A3 by the combined action of the FAD-binding monooxygenases ausB and ausC, and the dioxygenase ausE. Acid-catalyzed keto-rearrangement and ring contraction of the tetraketide portion of preaustinoid A3 by ausJ lead to the formation of preaustinoid A4. The aldo-keto reductase ausK, with the help of ausH, is involved in the next step by transforming preaustinoid A4 into isoaustinone which is in turn hydroxylated by the P450 monooxygenase ausI to form austinolide. Finally, the cytochrome P450 monooxygenase ausG modifies austinolide to austinol. Austinol can be further modified to dehydroaustinol which forms a diffusible complex with diorcinol that initiates conidiation. Due to genetic rearrangements of the clusters and the subsequent loss of some enzymes, the end products of the Emericella nidulans austinoid biosynthesis clusters are austinol and dehydroaustinol, even if additional enzymes, such as the O-acetyltransferase ausQ and the cytochrome P450 monooxygenase ausR are still functional. The protein is Iron/alpha-ketoglutarate-dependent dioxygenase ausU of Emericella nidulans (strain FGSC A4 / ATCC 38163 / CBS 112.46 / NRRL 194 / M139) (Aspergillus nidulans).